Consider the following 399-residue polypeptide: Zinc finger TRAF-type-containing protein 1 (399 aa).

Residues 1–13 (MSGAEEAGGGGPA) are compositionally biased toward gly residues. The tract at residues 1-20 (MSGAEEAGGGGPAAGPAGAV) is disordered. The RING-type; degenerate zinc-finger motif lies at 106-151 (CTVCLDLPKASVYQCTNGHLMCAGCFIHLLADARLKEEQATCPNCR). A TRAF-type zinc finger spans residues 152–210 (CEISKSLCCRNLAVEKAVSELPSECGFCLRQFPRSLLERHQKEECQDRVTQCKYKRIGC).

The protein belongs to the ZFTRAF1 family. As to quaternary structure, interacts with LGALS3.

It localises to the cytoplasm. The protein resides in the perinuclear region. In Rattus norvegicus (Rat), this protein is Zinc finger TRAF-type-containing protein 1.